A 194-amino-acid polypeptide reads, in one-letter code: dITP/XTP pyrophosphatase (194 aa).

7–12 (SGNVNK) contributes to the substrate binding site. Positions 38 and 67 each coordinate Mg(2+). Asp-67 acts as the Proton acceptor in catalysis. Substrate is bound by residues Ser-68, 151 to 154 (FGYD), Lys-174, and 179 to 180 (HR).

Belongs to the HAM1 NTPase family. As to quaternary structure, homodimer. Requires Mg(2+) as cofactor.

It carries out the reaction XTP + H2O = XMP + diphosphate + H(+). It catalyses the reaction dITP + H2O = dIMP + diphosphate + H(+). The catalysed reaction is ITP + H2O = IMP + diphosphate + H(+). Its function is as follows. Pyrophosphatase that catalyzes the hydrolysis of nucleoside triphosphates to their monophosphate derivatives, with a high preference for the non-canonical purine nucleotides XTP (xanthosine triphosphate), dITP (deoxyinosine triphosphate) and ITP. Seems to function as a house-cleaning enzyme that removes non-canonical purine nucleotides from the nucleotide pool, thus preventing their incorporation into DNA/RNA and avoiding chromosomal lesions. The sequence is that of dITP/XTP pyrophosphatase from Treponema denticola (strain ATCC 35405 / DSM 14222 / CIP 103919 / JCM 8153 / KCTC 15104).